The primary structure comprises 252 residues: Small ribosomal subunit protein eS1A (252 aa).

Residue Ala2 is modified to N-acetylalanine; partial.

It belongs to the eukaryotic ribosomal protein eS1 family. Component of the small ribosomal subunit (SSU). Mature yeast ribosomes consist of a small (40S) and a large (60S) subunit. The 40S small subunit contains 1 molecule of ribosomal RNA (18S rRNA) and at least 33 different proteins. The large 60S subunit contains 3 rRNA molecules (25S, 5.8S and 5S rRNA) and at least 46 different proteins. eS1 interacts directly with uS11 and eS26, which form part of the mRNA exit tunnel.

The protein resides in the cytoplasm. In terms of biological role, component of the ribosome, a large ribonucleoprotein complex responsible for the synthesis of proteins in the cell. The small ribosomal subunit (SSU) binds messenger RNAs (mRNAs) and translates the encoded message by selecting cognate aminoacyl-transfer RNA (tRNA) molecules. The large subunit (LSU) contains the ribosomal catalytic site termed the peptidyl transferase center (PTC), which catalyzes the formation of peptide bonds, thereby polymerizing the amino acids delivered by tRNAs into a polypeptide chain. The nascent polypeptides leave the ribosome through a tunnel in the LSU and interact with protein factors that function in enzymatic processing, targeting, and the membrane insertion of nascent chains at the exit of the ribosomal tunnel. The polypeptide is Small ribosomal subunit protein eS1A (rps101) (Schizosaccharomyces pombe (strain 972 / ATCC 24843) (Fission yeast)).